Here is a 214-residue protein sequence, read N- to C-terminus: MNVFRISGDVSHLLAIIILLLKMWKSKSCAGISGKSQLLFALVFTTRYLDLFTVFISAYNTVMKIVFLVCAYVTVYLIYGKFRKAYDSENDTFRLEFLLVPVIGLSFLENYEFTPLEILWTFSIYLESVAILPQLFMISKTGEAESITTHYLFFLGLYRVLYLANWIWRYHTEKFYDQIAVVSGVVQTIFYFDFFYLYITKVLKGKKLSLPMPV.

The Lumenal segment spans residues 1–4; the sequence is MNVF. A helical membrane pass occupies residues 5 to 24; the sequence is RISGDVSHLLAIIILLLKMW. The Cytoplasmic portion of the chain corresponds to 25-32; the sequence is KSKSCAGI. A helical transmembrane segment spans residues 33–52; sequence SGKSQLLFALVFTTRYLDLF. Residues 47–48 are interaction with the K-D-E-L motif on target proteins; the sequence is RY. Over 53–58 the chain is Lumenal; that stretch reads TVFISA. The helical transmembrane segment at 59–79 threads the bilayer; sequence YNTVMKIVFLVCAYVTVYLIY. Over 80 to 92 the chain is Cytoplasmic; it reads GKFRKAYDSENDT. Residues 93-110 form a helical membrane-spanning segment; sequence FRLEFLLVPVIGLSFLEN. The Lumenal segment spans residues 111–116; sequence YEFTPL. Residues 117–135 form a helical membrane-spanning segment; it reads EILWTFSIYLESVAILPQL. Topologically, residues 136 to 149 are cytoplasmic; that stretch reads FMISKTGEAESITT. The chain crosses the membrane as a helical span at residues 150-168; sequence HYLFFLGLYRVLYLANWIW. The tract at residues 159–169 is interaction with the K-D-E-L motif on target proteins; that stretch reads RVLYLANWIWR. Over 169-178 the chain is Lumenal; sequence RYHTEKFYDQ. The helical transmembrane segment at 179-199 threads the bilayer; it reads IAVVSGVVQTIFYFDFFYLYI. The Cytoplasmic portion of the chain corresponds to 200 to 214; it reads TKVLKGKKLSLPMPV. The interval 204–207 is important for recycling of cargo proteins with the sequence motif K-D-E-L from the Golgi to the endoplasmic reticulum; that stretch reads KGKK.

It belongs to the ERD2 family.

The protein localises to the endoplasmic reticulum membrane. It localises to the golgi apparatus membrane. The protein resides in the cytoplasmic vesicle. It is found in the COPI-coated vesicle membrane. Receptor for the C-terminal sequence motif K-D-E-L that is present on endoplasmic reticulum resident proteins and that mediates their recycling from the Golgi back to the endoplasmic reticulum. The sequence is that of ER lumen protein-retaining receptor 3 (kdelr3) from Xenopus tropicalis (Western clawed frog).